The primary structure comprises 268 residues: Tryptophan synthase alpha chain (268 aa).

Catalysis depends on proton acceptor residues Glu49 and Asp60.

The protein belongs to the TrpA family. In terms of assembly, tetramer of two alpha and two beta chains.

The enzyme catalyses (1S,2R)-1-C-(indol-3-yl)glycerol 3-phosphate + L-serine = D-glyceraldehyde 3-phosphate + L-tryptophan + H2O. Its pathway is amino-acid biosynthesis; L-tryptophan biosynthesis; L-tryptophan from chorismate: step 5/5. In terms of biological role, the alpha subunit is responsible for the aldol cleavage of indoleglycerol phosphate to indole and glyceraldehyde 3-phosphate. This Salmonella choleraesuis (strain SC-B67) protein is Tryptophan synthase alpha chain.